A 705-amino-acid chain; its full sequence is Translation initiation factor IF-2 (705 aa).

The segment at aspartate 40–serine 124 is disordered. The span at aspartate 41–asparagine 58 shows a compositional bias: basic and acidic residues. The segment covering lysine 59–glycine 77 has biased composition (low complexity). Positions lysine 94–lysine 108 are enriched in basic residues. A tr-type G domain is found at glutamate 207 to lysine 376. The tract at residues glycine 216–threonine 223 is G1. A GTP-binding site is contributed by glycine 216 to threonine 223. Positions glycine 241 to histidine 245 are G2. The tract at residues aspartate 262–glycine 265 is G3. GTP is bound by residues aspartate 262 to histidine 266 and asparagine 316 to aspartate 319. The tract at residues asparagine 316 to aspartate 319 is G4. Positions serine 352–leucine 354 are G5.

The protein belongs to the TRAFAC class translation factor GTPase superfamily. Classic translation factor GTPase family. IF-2 subfamily.

Its subcellular location is the cytoplasm. In terms of biological role, one of the essential components for the initiation of protein synthesis. Protects formylmethionyl-tRNA from spontaneous hydrolysis and promotes its binding to the 30S ribosomal subunits. Also involved in the hydrolysis of GTP during the formation of the 70S ribosomal complex. The chain is Translation initiation factor IF-2 from Staphylococcus aureus (strain MRSA252).